A 546-amino-acid polypeptide reads, in one-letter code: Putative serine/threonine-protein kinase L268 (546 aa).

Positions M1–V112 constitute a Cyclin N-terminal domain. Residues I260–N544 form the Protein kinase domain. Residues L266–V274 and K287 each bind ATP. The Proton acceptor role is filled by D389.

It belongs to the protein kinase superfamily. Ser/Thr protein kinase family.

The catalysed reaction is L-seryl-[protein] + ATP = O-phospho-L-seryl-[protein] + ADP + H(+). It carries out the reaction L-threonyl-[protein] + ATP = O-phospho-L-threonyl-[protein] + ADP + H(+). The protein is Putative serine/threonine-protein kinase L268 of Acanthamoeba polyphaga mimivirus (APMV).